Reading from the N-terminus, the 304-residue chain is Homoserine kinase (304 aa).

ATP is bound at residue 90–100 (PLARGLGSSAS).

This sequence belongs to the GHMP kinase family. Homoserine kinase subfamily.

The protein localises to the cytoplasm. The enzyme catalyses L-homoserine + ATP = O-phospho-L-homoserine + ADP + H(+). It participates in amino-acid biosynthesis; L-threonine biosynthesis; L-threonine from L-aspartate: step 4/5. Its function is as follows. Catalyzes the ATP-dependent phosphorylation of L-homoserine to L-homoserine phosphate. The sequence is that of Homoserine kinase from Staphylococcus aureus (strain NCTC 8325 / PS 47).